The primary structure comprises 250 residues: 5'-nucleotidase SurE (250 aa).

Residues Asp8, Asp9, Ser39, and Asn91 each coordinate a divalent metal cation.

It belongs to the SurE nucleotidase family. A divalent metal cation serves as cofactor.

It localises to the cytoplasm. The enzyme catalyses a ribonucleoside 5'-phosphate + H2O = a ribonucleoside + phosphate. Nucleotidase that shows phosphatase activity on nucleoside 5'-monophosphates. This chain is 5'-nucleotidase SurE, found in Syntrophotalea carbinolica (strain DSM 2380 / NBRC 103641 / GraBd1) (Pelobacter carbinolicus).